The sequence spans 561 residues: Mesoderm induction early response protein 2 (561 aa).

Disordered regions lie at residues 1–28 (MAEA…GEPN) and 52–188 (QNYG…EDPL). Residue Ser11 is modified to Phosphoserine. Residues 140 to 165 (QSSADDLTPSVTSHEASDLFPSQSGS) show a composition bias toward polar residues. One can recognise an ELM2 domain in the interval 195–292 (KEIMVGPQFQ…EALRRLRFNV (98 aa)). The 53-residue stretch at 297 to 349 (DGLCAWSEEERRNFEHGFRVHGKNFHLIQANKVRTRSVGECVEYYYLWKKSER) folds into the SANT domain. A disordered region spans residues 360-515 (GRRKYGPSGN…DGEPEETVGP (156 aa)). A compositionally biased stretch (low complexity) spans 417 to 428 (LSMGSSMSRSLG). The segment covering 439 to 451 (SSEPGPRLFPPLD) has biased composition (pro residues). A compositionally biased stretch (low complexity) spans 453 to 482 (PSALPSSRRPPALAEPAFFPPATAAPEPGA).

As to quaternary structure, part of a complex containing at least CDYL, MIER1, MIER2, HDAC1 and HDAC2.

The protein resides in the nucleus. In terms of biological role, transcriptional repressor. In Bos taurus (Bovine), this protein is Mesoderm induction early response protein 2 (MIER2).